Reading from the N-terminus, the 187-residue chain is Pre-mRNA-splicing factor cwf7 (187 aa).

Belongs to the SPF27 family. Belongs to the 40S cdc5-associated complex (or cwf complex), a spliceosome sub-complex reminiscent of a late-stage spliceosome composed of the U2, U5 and U6 snRNAs and at least brr2, cdc5, cwf2/prp3, cwf3/syf1, cwf4/syf3, cwf5/ecm2, spp42/cwf6, cwf7/spf27, cwf8, cwf9, cwf10, cwf11, cwf12, prp45/cwf13, cwf14, cwf15, cwf16, cwf17, cwf18, cwf19, cwf20, cwf21, cwf22, cwf23, cwf24, cwf25, cwf26, cyp7/cwf27, cwf28, cwf29/ist3, lea1, msl1, prp5/cwf1, prp10, prp12/sap130, prp17, prp22, sap61, sap62, sap114, sap145, slu7, smb1, smd1, smd3, smf1, smg1 and syf2.

It localises to the nucleus. Involved in mRNA splicing. This chain is Pre-mRNA-splicing factor cwf7 (cwf7), found in Schizosaccharomyces pombe (strain 972 / ATCC 24843) (Fission yeast).